The primary structure comprises 110 residues: Large ribosomal subunit protein uL24 (110 aa).

Belongs to the universal ribosomal protein uL24 family. In terms of assembly, part of the 50S ribosomal subunit.

In terms of biological role, one of two assembly initiator proteins, it binds directly to the 5'-end of the 23S rRNA, where it nucleates assembly of the 50S subunit. Its function is as follows. One of the proteins that surrounds the polypeptide exit tunnel on the outside of the subunit. The chain is Large ribosomal subunit protein uL24 from Chloroflexus aggregans (strain MD-66 / DSM 9485).